We begin with the raw amino-acid sequence, 237 residues long: Ubiquitin-conjugating enzyme E2 34 (237 aa).

Positions 5-162 (ACIKRLQKEY…FPEYVEKYNQ (158 aa)) constitute a UBC core domain. Cysteine 87 (glycyl thioester intermediate) is an active-site residue. The interval 168 to 207 (QATTQLTTPESPQKSDTKVESEKTIDPTKGDSEGGLKERK) is disordered. Positions 180–204 (QKSDTKVESEKTIDPTKGDSEGGLK) are enriched in basic and acidic residues. A helical membrane pass occupies residues 214-234 (LPAWIILLLVSVFGVVMALPL).

Belongs to the ubiquitin-conjugating enzyme family.

It localises to the membrane. It carries out the reaction S-ubiquitinyl-[E1 ubiquitin-activating enzyme]-L-cysteine + [E2 ubiquitin-conjugating enzyme]-L-cysteine = [E1 ubiquitin-activating enzyme]-L-cysteine + S-ubiquitinyl-[E2 ubiquitin-conjugating enzyme]-L-cysteine.. It participates in protein modification; protein ubiquitination. Accepts the ubiquitin from the E1 complex and catalyzes its covalent attachment to other proteins. The chain is Ubiquitin-conjugating enzyme E2 34 (UBC34) from Arabidopsis thaliana (Mouse-ear cress).